We begin with the raw amino-acid sequence, 99 residues long: NADH-quinone oxidoreductase subunit K (99 aa).

The next 3 helical transmembrane spans lie at 3–23 (PDNY…GVLL), 28–48 (IVMF…FVTF), and 59–79 (VVAF…LAII).

Belongs to the complex I subunit 4L family. In terms of assembly, NDH-1 is composed of 14 different subunits. Subunits NuoA, H, J, K, L, M, N constitute the membrane sector of the complex.

The protein resides in the cell membrane. It catalyses the reaction a quinone + NADH + 5 H(+)(in) = a quinol + NAD(+) + 4 H(+)(out). NDH-1 shuttles electrons from NADH, via FMN and iron-sulfur (Fe-S) centers, to quinones in the respiratory chain. The immediate electron acceptor for the enzyme in this species is believed to be a menaquinone. Couples the redox reaction to proton translocation (for every two electrons transferred, four hydrogen ions are translocated across the cytoplasmic membrane), and thus conserves the redox energy in a proton gradient. The polypeptide is NADH-quinone oxidoreductase subunit K (Mycolicibacterium gilvum (strain PYR-GCK) (Mycobacterium gilvum (strain PYR-GCK))).